The sequence spans 305 residues: UDP-3-O-acyl-N-acetylglucosamine deacetylase (305 aa).

His-79, His-238, and Asp-242 together coordinate Zn(2+). The active-site Proton donor is His-265.

It belongs to the LpxC family. Requires Zn(2+) as cofactor.

It catalyses the reaction a UDP-3-O-[(3R)-3-hydroxyacyl]-N-acetyl-alpha-D-glucosamine + H2O = a UDP-3-O-[(3R)-3-hydroxyacyl]-alpha-D-glucosamine + acetate. The protein operates within glycolipid biosynthesis; lipid IV(A) biosynthesis; lipid IV(A) from (3R)-3-hydroxytetradecanoyl-[acyl-carrier-protein] and UDP-N-acetyl-alpha-D-glucosamine: step 2/6. Functionally, catalyzes the hydrolysis of UDP-3-O-myristoyl-N-acetylglucosamine to form UDP-3-O-myristoylglucosamine and acetate, the committed step in lipid A biosynthesis. The sequence is that of UDP-3-O-acyl-N-acetylglucosamine deacetylase from Aliivibrio fischeri (strain ATCC 700601 / ES114) (Vibrio fischeri).